Reading from the N-terminus, the 256-residue chain is Hydroxyacylglutathione hydrolase (256 aa).

Positions 57, 59, 61, 62, 115, 134, and 172 each coordinate Zn(2+).

The protein belongs to the metallo-beta-lactamase superfamily. Glyoxalase II family. As to quaternary structure, monomer. It depends on Zn(2+) as a cofactor.

It carries out the reaction an S-(2-hydroxyacyl)glutathione + H2O = a 2-hydroxy carboxylate + glutathione + H(+). It functions in the pathway secondary metabolite metabolism; methylglyoxal degradation; (R)-lactate from methylglyoxal: step 2/2. In terms of biological role, thiolesterase that catalyzes the hydrolysis of S-D-lactoyl-glutathione to form glutathione and D-lactic acid. The sequence is that of Hydroxyacylglutathione hydrolase from Rhizobium meliloti (strain 1021) (Ensifer meliloti).